We begin with the raw amino-acid sequence, 313 residues long: Porphobilinogen deaminase (313 aa).

Residue Cys242 is modified to S-(dipyrrolylmethanemethyl)cysteine.

This sequence belongs to the HMBS family. Monomer. Requires dipyrromethane as cofactor.

It carries out the reaction 4 porphobilinogen + H2O = hydroxymethylbilane + 4 NH4(+). It participates in porphyrin-containing compound metabolism; protoporphyrin-IX biosynthesis; coproporphyrinogen-III from 5-aminolevulinate: step 2/4. In terms of biological role, tetrapolymerization of the monopyrrole PBG into the hydroxymethylbilane pre-uroporphyrinogen in several discrete steps. The polypeptide is Porphobilinogen deaminase (Pseudomonas putida (strain ATCC 700007 / DSM 6899 / JCM 31910 / BCRC 17059 / LMG 24140 / F1)).